A 40-amino-acid polypeptide reads, in one-letter code: Serine proteinase-like BMK-CBP (40 aa).

The 40-residue stretch at 1–40 (IFGGTFAKNGEYPWMVVIDLPEFACGGVLISKKFVLTAAH) folds into the Peptidase S1 domain. The active-site Charge relay system is His40.

The protein belongs to the peptidase S1 family. As to expression, expressed by the venom gland.

The protein localises to the secreted. Functionally, binds in a dose-dependent manner to the breast cancer cell line MCF-7. The polypeptide is Serine proteinase-like BMK-CBP (Olivierus martensii (Manchurian scorpion)).